The chain runs to 692 residues: Putative receptor-like protein kinase At1g80870 (692 aa).

Residues 20-40 (LFLILTISSSLVIFFAILYFI) form a helical membrane-spanning segment. Residues 81-673 (FDESNVIGKG…GEMDISSTAF (593 aa)) enclose the Protein kinase domain. ATP-binding positions include 87-95 (IGKGGSGTV) and lysine 109. Residue aspartate 206 is the Proton acceptor of the active site. 2 disordered regions span residues 427-446 (EISE…HRNM) and 511-533 (RRKS…GSEM). 2 stretches are compositionally biased toward basic residues: residues 432-444 (KNKR…KKHR) and 511-524 (RRKS…KKKN).

It belongs to the protein kinase superfamily. Ser/Thr protein kinase family.

It is found in the cell membrane. It carries out the reaction L-seryl-[protein] + ATP = O-phospho-L-seryl-[protein] + ADP + H(+). It catalyses the reaction L-threonyl-[protein] + ATP = O-phospho-L-threonyl-[protein] + ADP + H(+). In Arabidopsis thaliana (Mouse-ear cress), this protein is Putative receptor-like protein kinase At1g80870.